The chain runs to 475 residues: 3-isopropylmalate dehydratase large subunit (475 aa).

[4Fe-4S] cluster-binding residues include Cys353, Cys414, and Cys417.

It belongs to the aconitase/IPM isomerase family. LeuC type 1 subfamily. In terms of assembly, heterodimer of LeuC and LeuD. The cofactor is [4Fe-4S] cluster.

The enzyme catalyses (2R,3S)-3-isopropylmalate = (2S)-2-isopropylmalate. The protein operates within amino-acid biosynthesis; L-leucine biosynthesis; L-leucine from 3-methyl-2-oxobutanoate: step 2/4. Functionally, catalyzes the isomerization between 2-isopropylmalate and 3-isopropylmalate, via the formation of 2-isopropylmaleate. This is 3-isopropylmalate dehydratase large subunit from Ectopseudomonas mendocina (strain ymp) (Pseudomonas mendocina).